Reading from the N-terminus, the 621-residue chain is Probable bifunctional dTTP/UTP pyrophosphatase/methyltransferase protein (621 aa).

Positions 11-223 (LHKRVVLASA…PPRPEDLRRS (213 aa)) are MAF-like. Serine 21 bears the Phosphoserine mark. Aspartate 88 (proton acceptor; for pyrophosphatase activity) is an active-site residue. Serine 228 is modified (phosphoserine). A Phosphothreonine modification is found at threonine 234. The segment at 235 to 279 (FEDLSDVEGGGSEPTQRDAGSRDEKAEAGEAGQATAEAECHRTRE) is disordered. Serine 239 carries the post-translational modification Phosphoserine. Residues 249 to 262 (TQRDAGSRDEKAEA) are compositionally biased toward basic and acidic residues. Residues 277–621 (TRETLPPFPT…DAILATKVAP (345 aa)) are ASMT-like. The residue at position 421 (serine 421) is a Phosphoserine. S-adenosyl-L-methionine contacts are provided by residues aspartate 482, 508-510 (GDF), and arginine 525.

It in the N-terminal section; belongs to the Maf family. YhdE subfamily. The protein in the C-terminal section; belongs to the class I-like SAM-binding methyltransferase superfamily. Cation-independent O-methyltransferase family. As to quaternary structure, homodimer. It depends on a divalent metal cation as a cofactor. In terms of tissue distribution, widely expressed. In adult, highly expressed in pancreas, placenta, fibroblast, thymus, prostate, testis, ovary and colon. Expressed at lower levels in spleen, small intestine and leukocytes. In fetus, expressed at high levels in the lung and kidney and at lower level in brain and liver.

It catalyses the reaction dTTP + H2O = dTMP + diphosphate + H(+). The catalysed reaction is UTP + H2O = UMP + diphosphate + H(+). The enzyme catalyses CTP + H2O = CMP + diphosphate + H(+). It carries out the reaction psi-UTP + H2O = psi-UMP + diphosphate + H(+). It catalyses the reaction 5-methyl-UTP + H2O = 5-methyl-UMP + diphosphate + H(+). The catalysed reaction is 5-methyl-CTP + H2O = 5-methyl-CMP + diphosphate + H(+). Nucleoside triphosphate pyrophosphatase that hydrolyzes dTTP and UTP. Can also hydrolyze CTP and the modified nucleotides pseudo-UTP, 5-methyl-UTP (m(5)UTP) and 5-methyl-CTP (m(5)CTP). Has weak activity with dCTP, 8-oxo-GTP and N(4)-methyl-dCTP. May have a dual role in cell division arrest and in preventing the incorporation of modified nucleotides into cellular nucleic acids. In addition, the presence of the putative catalytic domain of S-adenosyl-L-methionine binding in the C-terminal region argues for a methyltransferase activity. The sequence is that of Probable bifunctional dTTP/UTP pyrophosphatase/methyltransferase protein (ASMTL) from Homo sapiens (Human).